We begin with the raw amino-acid sequence, 623 residues long: MFPQRLDSTVAYAIAKAMIDGFNRHYRLFRTESARAKHRFETADWHGQQRAQRERIEFYDLRVREASIRLEREFKAGEQPMDVWHQVKLHYIGLLVNHHQPELAETFFNSVTTKILHRSYFQNDFIFVRPAVSTEYIENQEPTAQPTYRAYYPTQGNMHETLVKLVEDFGLCREFEDLRRDAGYVAEAMAARLGDVKLRANFQIQVLSGLFFRNKGAYVVGKIINGFGEIPFALPILHRQPAPGQVLPADGKGISSQSDAGKLVIDAALFGEDDLLILFSFARAYFMVDMGIPSAFVQFLRSMMPRMPRAEIYNALGLAKQGKTLFYRDFLHHLRHSTDKFRIAPGIKGMVMLVFDLPSFPYVFKVIKDYYPPQKDTTREQIKGKYLLVKQHDRVGRMADTQEYSEVAFPRERFSDELIAEIEKFAPSQLEISDRDGDGQMEVIIKHVYIERRMIPLNIYLQEAFDFGVAEPAARDQIERAVVEYGNAIKDMVAANIFPGDMLWKNFGITRHGKVVFYDYDEIEYITDCKFRKVPTPRNEEDEMSGEVWYSVGPKDVFPETFGPFLLGNDAVREVFMKHHADLLDAAFWQRHQARIQAGHVYDVFPYDQQKRFAVMHGPARAG.

Residues Ala-344–Met-350 and Lys-365 contribute to the ATP site. The active site involves Asp-400.

It belongs to the AceK family.

It is found in the cytoplasm. The catalysed reaction is L-seryl-[isocitrate dehydrogenase] + ATP = O-phospho-L-seryl-[isocitrate dehydrogenase] + ADP + H(+). Its function is as follows. Bifunctional enzyme which can phosphorylate or dephosphorylate isocitrate dehydrogenase (IDH) on a specific serine residue. This is a regulatory mechanism which enables bacteria to bypass the Krebs cycle via the glyoxylate shunt in response to the source of carbon. When bacteria are grown on glucose, IDH is fully active and unphosphorylated, but when grown on acetate or ethanol, the activity of IDH declines drastically concomitant with its phosphorylation. The polypeptide is Isocitrate dehydrogenase kinase/phosphatase (Polaromonas naphthalenivorans (strain CJ2)).